The primary structure comprises 267 residues: Hydrolase FUB4 (267 aa).

Residues Ser93, Asp183, and His243 each act as charge relay system in the active site.

The protein belongs to the AB hydrolase 3 family.

It participates in mycotoxin biosynthesis. Hydrolase; part of the gene cluster that mediates the biosynthesis of fusaric acid, a mycotoxin with low to moderate toxicity to animals and humans, but with high phytotoxic properties. L-aspartate is suggested as fusaric acid amino acid precursor that is activated and further processed to O-acetyl-L-homoserine by cluster enzymes aspartate kinase FUB3 and homoserine O-acetyltransferase FUB5, as well as enzymes of the primary metabolism. The polyketide synthase (PKS) FUB1 generates the triketide trans-2-hexenal which is presumptively released by the hydrolase FUB4 and linked to the NRPS-bound amino acid precursor by NAD(P)-dependent dehydrogenase FUB6. FUB1, FUB4, and the non-canonical NRPS Fub8 may form an enzyme complex. Further processing of the NRPS-bound intermediate might be carried out by FUB6 and the sulfhydrylase FUB7, enabling a spontaneous electrocyclization to close the carbon backbone of fusaric acid. Dihydrofusaric acid is likely to be released via reduction by the thioester reductase (TR) domain of FUB8 whereupon the final oxidation to fusaric acid may (also) be performed by the FMN-dependent dehydrogenase FUB9. This chain is Hydrolase FUB4, found in Fusarium oxysporum f. sp. lycopersici (strain 4287 / CBS 123668 / FGSC 9935 / NRRL 34936) (Fusarium vascular wilt of tomato).